The following is a 429-amino-acid chain: Enolase (429 aa).

Q162 provides a ligand contact to (2R)-2-phosphoglycerate. Residue E204 is the Proton donor of the active site. 3 residues coordinate Mg(2+): D241, E283, and D310. 4 residues coordinate (2R)-2-phosphoglycerate: K335, R364, S365, and K386. Residue K335 is the Proton acceptor of the active site.

The protein belongs to the enolase family. Mg(2+) is required as a cofactor.

Its subcellular location is the cytoplasm. It is found in the secreted. The protein resides in the cell surface. The catalysed reaction is (2R)-2-phosphoglycerate = phosphoenolpyruvate + H2O. Its pathway is carbohydrate degradation; glycolysis; pyruvate from D-glyceraldehyde 3-phosphate: step 4/5. In terms of biological role, catalyzes the reversible conversion of 2-phosphoglycerate (2-PG) into phosphoenolpyruvate (PEP). It is essential for the degradation of carbohydrates via glycolysis. This Mycobacterium avium (strain 104) protein is Enolase.